The primary structure comprises 322 residues: Ribosomal RNA small subunit methyltransferase H (322 aa).

S-adenosyl-L-methionine is bound by residues 47–49, Asp67, Phe93, Asp112, and Gln119; that span reads GGH.

The protein belongs to the methyltransferase superfamily. RsmH family.

Its subcellular location is the cytoplasm. It catalyses the reaction cytidine(1402) in 16S rRNA + S-adenosyl-L-methionine = N(4)-methylcytidine(1402) in 16S rRNA + S-adenosyl-L-homocysteine + H(+). Functionally, specifically methylates the N4 position of cytidine in position 1402 (C1402) of 16S rRNA. This Stenotrophomonas maltophilia (strain K279a) protein is Ribosomal RNA small subunit methyltransferase H.